Reading from the N-terminus, the 598-residue chain is NADH-quinone oxidoreductase subunit C/D (598 aa).

The segment at 1–189 is NADH dehydrogenase I subunit C; that stretch reads MTDLTTSDSL…DPYVLTKQKE (189 aa). Residues 213-598 are NADH dehydrogenase I subunit D; that stretch reads DFMFLNLGPN…IDFVMSDVDR (386 aa).

In the N-terminal section; belongs to the complex I 30 kDa subunit family. This sequence in the C-terminal section; belongs to the complex I 49 kDa subunit family. NDH-1 is composed of 13 different subunits. Subunits NuoB, CD, E, F, and G constitute the peripheral sector of the complex.

Its subcellular location is the cell inner membrane. It catalyses the reaction a quinone + NADH + 5 H(+)(in) = a quinol + NAD(+) + 4 H(+)(out). In terms of biological role, NDH-1 shuttles electrons from NADH, via FMN and iron-sulfur (Fe-S) centers, to quinones in the respiratory chain. The immediate electron acceptor for the enzyme in this species is believed to be ubiquinone. Couples the redox reaction to proton translocation (for every two electrons transferred, four hydrogen ions are translocated across the cytoplasmic membrane), and thus conserves the redox energy in a proton gradient. This Yersinia pseudotuberculosis serotype O:1b (strain IP 31758) protein is NADH-quinone oxidoreductase subunit C/D.